A 228-amino-acid chain; its full sequence is Thermonuclease (228 aa).

The signal sequence occupies residues 1-23 (MTEYLLSAGICMAIVSILLIGMA). Residues 24–60 (ISNVSKGQYAKRFFYFATSCLVLTLVVVSSLSSSANA) constitute a propeptide that is removed on maturation. Residues 58 to 70 (ANASQTDNGVNRS) show a composition bias toward polar residues. The segment at 58 to 83 (ANASQTDNGVNRSGSEDPTVYSATST) is disordered. D100 provides a ligand contact to Ca(2+). R114 is a catalytic residue. 2 residues coordinate Ca(2+): D119 and T120. Active-site residues include E122 and R166.

This sequence belongs to the thermonuclease family. Ca(2+) is required as a cofactor.

Its subcellular location is the secreted. It catalyses the reaction Endonucleolytic cleavage to nucleoside 3'-phosphates and 3'-phosphooligonucleotide end-products.. Enzyme that catalyzes the hydrolysis of both DNA and RNA at the 5' position of the phosphodiester bond. The sequence is that of Thermonuclease (nuc) from Staphylococcus aureus (strain COL).